A 299-amino-acid polypeptide reads, in one-letter code: Glycerol-3-phosphate dehydrogenase [NAD(P)+] (299 aa).

Positions 11, 30, 31, and 79 each coordinate NADPH. 3 residues coordinate sn-glycerol 3-phosphate: Lys-79, Gly-107, and Ser-109. Position 111 (Ala-111) interacts with NADPH. Residues Lys-161, Asp-214, Ser-224, Arg-225, and Asn-226 each coordinate sn-glycerol 3-phosphate. Lys-161 functions as the Proton acceptor in the catalytic mechanism. Arg-225 lines the NADPH pocket. 2 residues coordinate NADPH: Val-249 and Glu-251.

Belongs to the NAD-dependent glycerol-3-phosphate dehydrogenase family.

The protein resides in the cytoplasm. The enzyme catalyses sn-glycerol 3-phosphate + NAD(+) = dihydroxyacetone phosphate + NADH + H(+). It carries out the reaction sn-glycerol 3-phosphate + NADP(+) = dihydroxyacetone phosphate + NADPH + H(+). Its pathway is membrane lipid metabolism; glycerophospholipid metabolism. Catalyzes the reduction of the glycolytic intermediate dihydroxyacetone phosphate (DHAP) to sn-glycerol 3-phosphate (G3P), the key precursor for phospholipid synthesis. This chain is Glycerol-3-phosphate dehydrogenase [NAD(P)+], found in Nitratiruptor sp. (strain SB155-2).